The primary structure comprises 162 residues: Interleukin-2 (162 aa).

The N-terminal stretch at 1 to 20 (MYKIQLLSCIALTLALVANG) is a signal peptide. T23 is a glycosylation site (O-linked (GalNAc...) threonine). N70 carries an N-linked (GlcNAc...) asparagine glycan. C79 and C134 are oxidised to a cystine.

This sequence belongs to the IL-2 family.

It localises to the secreted. Cytokine produced by activated CD4-positive helper T-cells and to a lesser extend activated CD8-positive T-cells and natural killer (NK) cells that plays pivotal roles in the immune response and tolerance. Binds to a receptor complex composed of either the high-affinity trimeric IL-2R (IL2RA/CD25, IL2RB/CD122 and IL2RG/CD132) or the low-affinity dimeric IL-2R (IL2RB and IL2RG). Interaction with the receptor leads to oligomerization and conformation changes in the IL-2R subunits resulting in downstream signaling starting with phosphorylation of JAK1 and JAK3. In turn, JAK1 and JAK3 phosphorylate the receptor to form a docking site leading to the phosphorylation of several substrates including STAT5. This process leads to activation of several pathways including STAT, phosphoinositide-3-kinase/PI3K and mitogen-activated protein kinase/MAPK pathways. Functions as a T-cell growth factor and can increase NK-cell cytolytic activity as well. Promotes strong proliferation of activated B-cells and subsequently immunoglobulin production. Plays a pivotal role in regulating the adaptive immune system by controlling the survival and proliferation of regulatory T-cells, which are required for the maintenance of immune tolerance. Moreover, participates in the differentiation and homeostasis of effector T-cell subsets, including Th1, Th2, Th17 as well as memory CD8-positive T-cells. This is Interleukin-2 (IL2) from Cervus elaphus (Red deer).